Reading from the N-terminus, the 316-residue chain is tRNA dimethylallyltransferase (316 aa).

An ATP-binding site is contributed by 19–26 (GPTASGKT). Substrate is bound at residue 21–26 (TASGKT). Interaction with substrate tRNA regions lie at residues 44-47 (DSAL), 168-172 (QRITR), and 249-254 (RCVGYR).

Belongs to the IPP transferase family. In terms of assembly, monomer. Requires Mg(2+) as cofactor.

The catalysed reaction is adenosine(37) in tRNA + dimethylallyl diphosphate = N(6)-dimethylallyladenosine(37) in tRNA + diphosphate. Its function is as follows. Catalyzes the transfer of a dimethylallyl group onto the adenine at position 37 in tRNAs that read codons beginning with uridine, leading to the formation of N6-(dimethylallyl)adenosine (i(6)A). The chain is tRNA dimethylallyltransferase from Colwellia psychrerythraea (strain 34H / ATCC BAA-681) (Vibrio psychroerythus).